The chain runs to 318 residues: Ferredoxin--NADP reductase (318 aa).

Residues D33, Q41, Y46, V84, F115, D276, and T316 each contribute to the FAD site.

Belongs to the ferredoxin--NADP reductase type 2 family. As to quaternary structure, homodimer. FAD serves as cofactor.

The catalysed reaction is 2 reduced [2Fe-2S]-[ferredoxin] + NADP(+) + H(+) = 2 oxidized [2Fe-2S]-[ferredoxin] + NADPH. This chain is Ferredoxin--NADP reductase, found in Lactobacillus gasseri (strain ATCC 33323 / DSM 20243 / BCRC 14619 / CIP 102991 / JCM 1131 / KCTC 3163 / NCIMB 11718 / NCTC 13722 / AM63).